The following is a 177-amino-acid chain: Large ribosomal subunit protein uL6 (177 aa).

This sequence belongs to the universal ribosomal protein uL6 family. In terms of assembly, part of the 50S ribosomal subunit.

In terms of biological role, this protein binds to the 23S rRNA, and is important in its secondary structure. It is located near the subunit interface in the base of the L7/L12 stalk, and near the tRNA binding site of the peptidyltransferase center. This is Large ribosomal subunit protein uL6 from Yersinia pseudotuberculosis serotype O:1b (strain IP 31758).